A 114-amino-acid chain; its full sequence is U17-barytoxin-Tl1a (114 aa).

The first 20 residues, 1-20 (MKTIIVFLSLLVLATKFGDA), serve as a signal peptide directing secretion. A propeptide spanning residues 21-74 (NEGVNQEQMKEVIQNEFREDFLNEMAPMSLLQQLEAIESTLLEKEADRNSRQKR) is cleaved from the precursor. 3 disulfide bridges follow: Cys-75–Cys-88, Cys-82–Cys-93, and Cys-87–Cys-108.

It belongs to the neurotoxin 14 (magi-1) family. 03 (ICK-30-40) subfamily. Expressed by the venom gland.

The protein localises to the secreted. In terms of biological role, ion channel inhibitor. The protein is U17-barytoxin-Tl1a of Trittame loki (Brush-footed trapdoor spider).